Reading from the N-terminus, the 106-residue chain is ATP-dependent Clp protease adapter protein ClpS (106 aa).

Belongs to the ClpS family. Binds to the N-terminal domain of the chaperone ClpA.

Its function is as follows. Involved in the modulation of the specificity of the ClpAP-mediated ATP-dependent protein degradation. The chain is ATP-dependent Clp protease adapter protein ClpS from Edwardsiella ictaluri (strain 93-146).